Consider the following 274-residue polypeptide: 4-deoxy-L-threo-5-hexosulose-uronate ketol-isomerase (274 aa).

Zn(2+)-binding residues include histidine 192, histidine 194, glutamate 199, and histidine 241.

It belongs to the KduI family. Zn(2+) serves as cofactor.

It catalyses the reaction 5-dehydro-4-deoxy-D-glucuronate = 3-deoxy-D-glycero-2,5-hexodiulosonate. Its pathway is glycan metabolism; pectin degradation; 2-dehydro-3-deoxy-D-gluconate from pectin: step 4/5. Its function is as follows. Catalyzes the isomerization of 5-dehydro-4-deoxy-D-glucuronate to 3-deoxy-D-glycero-2,5-hexodiulosonate. The polypeptide is 4-deoxy-L-threo-5-hexosulose-uronate ketol-isomerase (Shigella boydii serotype 18 (strain CDC 3083-94 / BS512)).